The primary structure comprises 396 residues: Probable sugar efflux transporter (396 aa).

Residues 1 to 14 (MTINPVSRKVAWLR) lie on the Cytoplasmic side of the membrane. A helical membrane pass occupies residues 15-35 (VVTLAIAAFIFNTTEFVPVGL). Residues 36–49 (LSDIAESFHMQTAQ) lie on the Periplasmic side of the membrane. A helical transmembrane segment spans residues 50–70 (VGIMLTIYAWVVAVMSLPFML). At 71–80 (LTSQMERRKL) the chain is on the cytoplasmic side. Residues 81–101 (LIYLFVLFIASHVLSFLAWNF) form a helical membrane-spanning segment. A topological domain (periplasmic) is located at residue T102. Residues 103 to 123 (VLVISRIGIAFAHAIFWSITA) form a helical membrane-spanning segment. At 124-135 (SLAIRLAPAGKR) the chain is on the cytoplasmic side. The helical transmembrane segment at 136-156 (AQALSLIATGTALAMVLGLPI) threads the bilayer. Residues 157–168 (GRVVGQYFGWRT) are Periplasmic-facing. Residues 169–189 (TFFAIGMGALITLLCLIKLLP) traverse the membrane as a helical segment. Over 190 to 208 (KLPSEHSGSLKSLPLLFRR) the chain is Cytoplasmic. A helical transmembrane segment spans residues 209-229 (PALMSLYVLTVVVVTAHYTAY). The Periplasmic segment spans residues 230-245 (SYIEPFVQNVAGLSAN). Residues 246–266 (FATVLLLILGGAGIIGSLVFG) form a helical membrane-spanning segment. At 267 to 274 (KLGNRHAS) the chain is on the cytoplasmic side. A helical transmembrane segment spans residues 275–295 (SLVSIAIALLVVCLLLLLPAA). Over 296 to 300 (ESEAH) the chain is Periplasmic. The chain crosses the membrane as a helical span at residues 301-321 (LAILSIFWGIAIMVIGLGMQV). Residues 322–332 (KVLALAPDATD) are Cytoplasmic-facing. The helical transmembrane segment at 333 to 353 (VAMALFSGIFNIGIGAGALVG) threads the bilayer. The Periplasmic portion of the chain corresponds to 354-363 (NQVSLHWSMS). Residues 364 to 384 (AIGYIGAIPACAALVWAVLIF) form a helical membrane-spanning segment. At 385 to 396 (RKWPVTLEEQPH) the chain is on the cytoplasmic side.

This sequence belongs to the major facilitator superfamily. SotB (TC 2.A.1.2) family.

The protein resides in the cell inner membrane. Its function is as follows. Involved in the efflux of sugars. The physiological role may be the reduction of the intracellular concentration of toxic sugars or sugar metabolites. The polypeptide is Probable sugar efflux transporter (Salmonella typhimurium (strain LT2 / SGSC1412 / ATCC 700720)).